The following is a 720-amino-acid chain: MKKRLLLPLFAALCLSQIAHADEGMWLMQQLGRKYAQMKERGLKMKEYDLYNPNGTSLKDAVVLFDGGCTGEVVSDRGLVLTNHHCGYDMIQAHSTLEHNYLENGFWAMREADELPNKDISVVFIDKIEDVTDYVKKELKAIKDPNSMDYLSPKYLQKLADKKAGKNFSAKNPGLSVEIKAFYGGNLYLMFTKKTYTDVRLVGAPPSSIGKFGADTDNWIWPRHTGDFSIFRIYADKNGNPAPYSEDNVPLKPKRFFNISLGGVQENDYAMIMGFPGTTHRYFTASEVDEWKSIDNDIRIRMRDIRQGVMLREMLADPQIKIMYSAKYAASQNAYKRAIGANWAIKTRGLRQNKQAMQDRLIAWGAKQGTPRYEEAVHEIDATVAKRADLRRRYWMIEEGIIRGIEFARSPIPTEDETKALQGNDASARKEAIDKIRTRYSKFANKDYSAEVDKKVAVAMLTEYLKEIPYENLPLHLRLVKDRFAGDVQAYVDDIFARSVFGSEAQFDAFAAVPSVEKLAEDPMVLFASSVFDEYRKLYNELRPYDDPILRAQRTYIAGLLEMDGDQDQFPDANLTLRFTYGQVKGYSPRDNVYYGHQTTLDGVMEKEDPDNWEFVVDPKLKAVYERKDFGRYADRSGRMPVAFCATTHTTGGNSGSPVMNANGELIGLNFDRNWEGVGGDIQYLADYQRSIIVDIRYVLLVIDKVGGCQRLLDEMNIVP.

Residues 1–21 form the signal peptide; it reads MKKRLLLPLFAALCLSQIAHA. A disulfide bridge connects residues cysteine 69 and cysteine 86. Catalysis depends on charge relay system residues histidine 85, aspartate 227, and serine 655.

This sequence belongs to the peptidase S46 family. In terms of assembly, homodimer.

The protein resides in the cell surface. With respect to regulation, enzyme activity is completely blocked by diisopropyl-fluorophosphates, moderately by phenylmethylsulfonyl fluoride (PMSF) and 4-(2-methyl)benzenesulfonyl fluoride, and slightly by pepstatin in vitro. Its function is as follows. Catalyzes the removal of dipeptides from the N-terminus of oligopeptides. Shows a strict specificity for acidic residues (Asp or Glu) in the P1 position, and has a hydrophobic residue preference at the P2 position. Preferentially cleaves the synthetic substrate Leu-Asp-methylcoumaryl-7-amide (Leu-Asp-MCA) as compared to Leu-Glu-MCA. Is involved in amino acid metabolism and bacterial growth of asaccharolytic P.gingivalis, that utilizes amino acids from extracellular proteinaceous nutrients as energy and carbon sources. This chain is Asp/Glu-specific dipeptidyl-peptidase, found in Porphyromonas gingivalis (strain ATCC 33277 / DSM 20709 / CIP 103683 / JCM 12257 / NCTC 11834 / 2561).